A 563-amino-acid polypeptide reads, in one-letter code: MVYTKHIIVHKLKHLRQAKDYVENAEKTLVNESNEDHLTNLFPYISNPDKTMSKQLVSGHGITNVYDAANEFIATKKLKALSKGTDFNFDPQTGKVRFNVESLEKNNAVLGHHLIQSFSPDDNLTPEQIHEIGRQTILEFTGGEYEFVIATHVDREHIHNHIIFNSTNLYTGKQFDWKVIPKEKTKSGKAYDVTKNNFEKVSDKIASRYGAKIIEKSPGNSHLKYTKWQTQSIYKSQIKQRLDYLLEMSSDIEDFKRKATALNLSFDFSGKWTTYRLLDEPQMKNTRGRNLDKNRPEKYNLESIIERLETNELSLTVDEVVERYEEKVDVVKQDFDYQVTVEKGQIDHMTSKGFYLNVDFGIADRGQIFIGGYKVDQLENRDCVLYLKKNETFRLLSEKEASFTKYLTGHDLAKQLGLYNGTVPLKKEPVISTINQLVDAINFLAEHGVTEGTQFNNMESQLMSALGEAEEKLYVIDNKIMELTKIAKLLIEKESDHSQAVINELENLGVGPSIKYQDIHQELQSEKMSRKILKNKFEQTVDEINTFNEIRVTTLEENKGKIL.

The active site involves tyrosine 44. Mg(2+) contacts are provided by histidine 159 and histidine 161.

Belongs to the mobilization (MOB) protein type 1 family. Requires Mg(2+) as cofactor. The cofactor is Mn(2+).

Mediates initiation of conjugal transfer possibly by introducing a single-stranded nick at the potential origin of transfer. The chain is Group II intron-interrupted relaxase LtrB (ltrBE1) from Lactococcus lactis subsp. cremoris (strain MG1363).